A 507-amino-acid chain; its full sequence is NAD(P)H-quinone oxidoreductase chain 4, chloroplastic (507 aa).

15 consecutive transmembrane segments (helical) span residues 4-24 (FPWL…IFLL), 37-57 (LCIC…HFQL), 87-107 (IGPI…AWPV), 111-131 (AQLF…SFSS), 134-154 (LLLF…LLSM), 167-187 (FILY…GIGL), 208-228 (ALEV…LPII), 242-262 (HYST…YGLV), 272-292 (AHCL…IYAA), 305-325 (IAYS…SLSD), 330-350 (GAIL…FLAG), 386-406 (LALP…GIIT), 416-436 (ILIA…SLSM), 462-482 (LFVS…PDFV), and 483-503 (LSLS…SIVF).

The protein belongs to the complex I subunit 4 family.

It is found in the plastid. Its subcellular location is the chloroplast thylakoid membrane. The catalysed reaction is a plastoquinone + NADH + (n+1) H(+)(in) = a plastoquinol + NAD(+) + n H(+)(out). The enzyme catalyses a plastoquinone + NADPH + (n+1) H(+)(in) = a plastoquinol + NADP(+) + n H(+)(out). The sequence is that of NAD(P)H-quinone oxidoreductase chain 4, chloroplastic (ndhD) from Oenothera elata subsp. hookeri (Hooker's evening primrose).